A 522-amino-acid polypeptide reads, in one-letter code: Target of rapamycin complex 2 subunit MAPKAP1 (522 aa).

Position 2 is an N-acetylalanine (alanine 2). The interval alanine 2–histidine 184 is interaction with MAP3K2. The segment at alanine 2–lysine 267 is interaction with NBN. A disordered region spans residues leucine 38–glycine 59. The residue at position 86 (threonine 86) is a Phosphothreonine. Phosphoserine is present on residues serine 128, serine 186, serine 315, and serine 356. A CRIM domain is found at glutamine 139–lysine 267. Positions leucine 279–arginine 353 are SIN1-type RBD. One can recognise an SIN1-type PH domain in the interval histidine 382 to glutamate 487. Arginine 393 serves as a coordination point for a 1,2-diacyl-sn-glycero-3-phospho-(1D-myo-inositol-3,4,5-trisphosphate). Threonine 398 is modified (phosphothreonine). Residues lysine 428 and lysine 464 each contribute to the a 1,2-diacyl-sn-glycero-3-phospho-(1D-myo-inositol-3,4,5-trisphosphate) site. The interaction with ATF2 stretch occupies residues phenylalanine 468–glutamine 522. Serine 510 bears the Phosphoserine mark.

It belongs to the SIN1 family. In terms of assembly, component of the mechanistic target of rapamycin complex 2 (mTORC2), consisting in two heterotretramers composed of MTOR, MLST8, RICTOR and MAPKAP1/SIN1. The mTORC2 core complex associates with PRR5/PROTOR1 and/or PRR5L/PROTOR2. Contrary to mTORC1, mTORC2 does not bind to and is not sensitive to FKBP12-rapamycin. Interacts with MAP3K2. Interacts with ATF2. Interacts with MAPK8. Interacts with GTP-bound HRAS and KRAS; inhibiting their activity. Interacts with IFNAR2. In terms of processing, phosphorylation at Ser-128 by PKC promotes relocalization to the perinuclear region, where the mTORC2 complex specifically mediates phosphorylation of SGK1. Phosphorylated at Thr-86 by AKT1 or RPS6KB1 in the presence of growth factors; the effect of this phosphorylation is however unclear. According to two studies, phosphorylation at Thr-86 by AKT1 is part of a positive feedback loop that increases mTORC2 activation. According to another study, phosphorylation at Thr-86 and Thr-398 by RPS6KB1 promotes dissociation from the mTORC2 complex, leading to inhibit mTORC2 signaling.

It localises to the cell membrane. It is found in the endoplasmic reticulum membrane. The protein localises to the early endosome membrane. The protein resides in the late endosome membrane. Its subcellular location is the lysosome membrane. It localises to the golgi apparatus membrane. It is found in the mitochondrion outer membrane. The protein localises to the cytoplasm. The protein resides in the perinuclear region. Its subcellular location is the nucleus. Phosphatidylinositol 3,4,5-trisphosphate (PI(3,4,5)P3) promotes MTOR activation by relieving MAPKAP1/SIN1-mediated inhibition of MTOR that takes place in absence of PI(3,4,5)P3. In terms of biological role, component of the mechanistic target of rapamycin complex 2 (mTORC2), which transduces signals from growth factors to pathways involved in proliferation, cytoskeletal organization, lipogenesis and anabolic output. In response to growth factors, mTORC2 phosphorylates and activates AGC protein kinase family members, including AKT (AKT1, AKT2 and AKT3), PKC (PRKCA, PRKCB and PRKCE) and SGK1. In contrast to mTORC1, mTORC2 is nutrient-insensitive. Within the mTORC2 complex, MAPKAP1/SIN1 acts as a substrate adapter which recognizes and binds AGC protein kinase family members for phosphorylation by MTOR. mTORC2 plays a critical role in AKT1 activation by mediating phosphorylation of different sites depending on the context, such as 'Thr-450', 'Ser-473', 'Ser-477' or 'Thr-479', facilitating the phosphorylation of the activation loop of AKT1 on 'Thr-308' by PDPK1/PDK1 which is a prerequisite for full activation. mTORC2 catalyzes the phosphorylation of SGK1 at 'Ser-422' and of PRKCA on 'Ser-657'. The mTORC2 complex also phosphorylates various proteins involved in insulin signaling, such as FBXW8 and IGF2BP1. mTORC2 acts upstream of Rho GTPases to regulate the actin cytoskeleton, probably by activating one or more Rho-type guanine nucleotide exchange factors. mTORC2 promotes the serum-induced formation of stress-fibers or F-actin. MAPKAP1 inhibits MAP3K2 by preventing its dimerization and autophosphorylation. Inhibits HRAS and KRAS independently of mTORC2 complex. Enhances osmotic stress-induced phosphorylation of ATF2 and ATF2-mediated transcription. Involved in ciliogenesis, regulates cilia length through its interaction with CCDC28B independently of mTORC2 complex. This is Target of rapamycin complex 2 subunit MAPKAP1 from Rattus norvegicus (Rat).